We begin with the raw amino-acid sequence, 43 residues long: DeltaKappa-actitoxin-Avd4b (43 aa).

3 disulfide bridges follow: Cys-4/Cys-39, Cys-6/Cys-32, and Cys-22/Cys-40.

The protein belongs to the sea anemone type 3 (BDS) potassium channel toxin family.

It is found in the secreted. Its subcellular location is the nematocyst. Functionally, acts as a gating modifier on both Kv and Nav ion channels. Voltage-dependently inhibits voltage-gated potassium channels Kv3 (Kv3.1/KCNC1, Kv3.2/KCNC2 and Kv3.4/KCNC4). Slows inactivation of the voltage-gated sodium channel Nav1.7/SCN9A. Inhibits all Kv3.1, Kv3.2 and Kv3.4 by about 50% when tested at a voltage of +40 mV. May act by binding residues in voltage-sensing domains S3b and S4 of Kv3. Tests have been done on human Nav1.7/SCN9A and rat SCG neurons that mostly carry Nav1.7 channels (EC(50)=300 nM). This toxin also reduces blood pressure. This Anemonia sulcata (Mediterranean snakelocks sea anemone) protein is DeltaKappa-actitoxin-Avd4b.